Consider the following 503-residue polypeptide: Maturase K (503 aa).

It belongs to the intron maturase 2 family. MatK subfamily.

It localises to the plastid. The protein resides in the chloroplast. Usually encoded in the trnK tRNA gene intron. Probably assists in splicing its own and other chloroplast group II introns. This Rubus ursinus (California blackberry) protein is Maturase K.